Here is a 360-residue protein sequence, read N- to C-terminus: MSDLAKLESEILSAVAAAPDEAALEAVRVGALGKKGSISALLSTLGKMSPEERKTEGAAINAAKDKVTAALTARREVLKNAALDARLASETIDVTLPTRETPAEQGRIHPISQVMDELTAIFADMGFSIAEGPDIETDDYNFTKLNFPEGHPAREMHDTFFFNRKEDGSRPLLRTHTSPVQVRTMLSQQPPIRVICPGRTYRCDSDQTHTPMFHQVEGLVIDKGSHLGHLKWILSEFCKAFFEVDNVNMRFRPSFFPFTEPSMEVDIQCRRGKNDIRFGEGDDWLEILGCGMVHPNVLKNCGIDPDVYQGFAWGMGIDRIAMLKYGISDLRQMFEGDVRWLNHYGFKPLDVPTLAGGLSS.

Glu-260 provides a ligand contact to Mg(2+).

This sequence belongs to the class-II aminoacyl-tRNA synthetase family. Phe-tRNA synthetase alpha subunit type 1 subfamily. In terms of assembly, tetramer of two alpha and two beta subunits. The cofactor is Mg(2+).

The protein resides in the cytoplasm. The catalysed reaction is tRNA(Phe) + L-phenylalanine + ATP = L-phenylalanyl-tRNA(Phe) + AMP + diphosphate + H(+). The chain is Phenylalanine--tRNA ligase alpha subunit from Afipia carboxidovorans (strain ATCC 49405 / DSM 1227 / KCTC 32145 / OM5) (Oligotropha carboxidovorans).